We begin with the raw amino-acid sequence, 577 residues long: Autophagy-related protein 20 (577 aa).

The disordered stretch occupies residues 57–81 (GQSYVAPHSGGGRTSSGSSSSASLQ). The 145-residue stretch at 95-239 (GEQGRVRILE…DFLDPNNANW (145 aa)) folds into the PX domain. A 1,2-diacyl-sn-glycero-3-phospho-(1D-myo-inositol-3-phosphate) is bound by residues R131, S133, K157, and R205.

It belongs to the sorting nexin family.

Its subcellular location is the endosome membrane. The protein localises to the preautophagosomal structure membrane. Required for cytoplasm to vacuole transport (Cvt), pexophagy and mitophagy. Also involved in endoplasmic reticulum-specific autophagic process and is essential for the survival of cells subjected to severe ER stress. Functions in protein retrieval from the endocytic pathway. This is Autophagy-related protein 20 (ATG20) from Eremothecium gossypii (strain ATCC 10895 / CBS 109.51 / FGSC 9923 / NRRL Y-1056) (Yeast).